The sequence spans 188 residues: dCTP deaminase (188 aa).

DCTP-binding positions include Lys-111–Arg-116, Thr-135–Glu-137, Gln-156, Tyr-170, and Gln-180. Glu-137 (proton donor/acceptor) is an active-site residue.

This sequence belongs to the dCTP deaminase family. As to quaternary structure, homotrimer.

It catalyses the reaction dCTP + H2O + H(+) = dUTP + NH4(+). The protein operates within pyrimidine metabolism; dUMP biosynthesis; dUMP from dCTP (dUTP route): step 1/2. Functionally, catalyzes the deamination of dCTP to dUTP. The protein is dCTP deaminase of Francisella tularensis subsp. tularensis (strain FSC 198).